A 682-amino-acid polypeptide reads, in one-letter code: Polycomb protein suz12-B (682 aa).

The tract at residues 326 to 355 (DPSDPSTAPVAKPLSTRNSDTSTTESRIST) is disordered. The segment covering 340-354 (STRNSDTSTTESRIS) has biased composition (polar residues). The C2H2-type zinc finger occupies 408–431 (LHCPWCTLNCRKLYSLLKHLKLSH). The interval 523-599 (RLYFHSDSCM…NQMSQASMLF (77 aa)) is VEFS-box.

It belongs to the VEFS (VRN2-EMF2-FIS2-SU(Z)12) family. As to quaternary structure, component of the prc2/eed-ezh2 complex.

Its subcellular location is the nucleus. Its function is as follows. Polycomb group (PcG) protein. Component of the prc2/eed-ezh2 complex, which methylates 'Lys-9' and 'Lys-27' of histone H3, leading to transcriptional repression of the affected target gene. In Danio rerio (Zebrafish), this protein is Polycomb protein suz12-B (suz12b).